A 66-amino-acid chain; its full sequence is Large ribosomal subunit protein uL29 (66 aa).

This sequence belongs to the universal ribosomal protein uL29 family.

The sequence is that of Large ribosomal subunit protein uL29 (rpmC) from Helicobacter pylori (strain J99 / ATCC 700824) (Campylobacter pylori J99).